The sequence spans 60 residues: Putative mercuric resistance protein (60 aa).

This is Putative mercuric resistance protein from Shigella flexneri.